Reading from the N-terminus, the 334-residue chain is UstYa family oxidase aprY (334 aa).

A helical membrane pass occupies residues 55–75 (IWILLTITNLIILGITVSMIV). N-linked (GlcNAc...) asparagine glycosylation is present at asparagine 112. The HXXHC 1 signature appears at 185 to 189 (HQIHC). The N-linked (GlcNAc...) asparagine glycan is linked to asparagine 214. Positions 223–227 (HLGHC) match the HXXHC 2 motif. The segment covering 306 to 318 (SELGEKLGKHQKQ) has biased composition (basic and acidic residues). A disordered region spans residues 306–334 (SELGEKLGKHQKQEGVLGQAGHQHTKRHE).

This sequence belongs to the ustYa family.

The protein localises to the membrane. Its pathway is secondary metabolite biosynthesis. UstYa family oxidase; part of the gene cluster that mediates the biosynthesis of the asperipin-2a, a bicyclic peptide that possesses two macrocyclic ether rings consisting of 14- and 17-membered paracyclophans. Within the pathway, aprY is responsible for the synthesis of the bicyclic structure of asperipin-2a. The pathway starts with the processing of the precursor aprA by kexin proteases to produce 11 identical copies of the hexapeptide Phe-Tyr-Tyr-Thr-Gly-Tyr. Macrocyclization of asperipin-2a may accompany an alpha-hydroxylation-dehydration sequence to give an imine, which is readily hydrolyzed to yield putative ketone intermediate. The reductase aprR may be required for the final reduction to yield asperipin-2a. The protein is UstYa family oxidase aprY of Aspergillus flavus (strain ATCC 200026 / FGSC A1120 / IAM 13836 / NRRL 3357 / JCM 12722 / SRRC 167).